The chain runs to 218 residues: Protein N-lysine methyltransferase METTL21A (218 aa).

S-adenosyl-L-methionine is bound by residues Trp-47, 73–75, Asp-94, Trp-125, and Ala-143; that span reads GAG.

This sequence belongs to the methyltransferase superfamily. METTL21 family.

Its subcellular location is the cytoplasm. The catalysed reaction is L-lysyl-[protein] + 3 S-adenosyl-L-methionine = N(6),N(6),N(6)-trimethyl-L-lysyl-[protein] + 3 S-adenosyl-L-homocysteine + 3 H(+). In terms of biological role, protein-lysine methyltransferase that selectively trimethylates residues in heat shock protein 70 (HSP70) family members. The polypeptide is Protein N-lysine methyltransferase METTL21A (mettl21a) (Danio rerio (Zebrafish)).